Consider the following 902-residue polypeptide: Probable leucine--tRNA ligase, mitochondrial (902 aa).

Lys67 is subject to N6-acetyllysine. The 'HIGH' region signature appears at 91-101 (YPSGKLHMGHV). An N6-acetyllysine modification is found at Lys235. The 'KMSKS' region motif lies at 638-642 (KMSKS). ATP is bound at residue Lys641.

The protein belongs to the class-I aminoacyl-tRNA synthetase family.

The protein localises to the mitochondrion matrix. It catalyses the reaction tRNA(Leu) + L-leucine + ATP = L-leucyl-tRNA(Leu) + AMP + diphosphate. The protein is Probable leucine--tRNA ligase, mitochondrial (Lars2) of Mus musculus (Mouse).